The chain runs to 354 residues: Peptide chain release factor 1 (354 aa).

Residue Gln-230 is modified to N5-methylglutamine.

The protein belongs to the prokaryotic/mitochondrial release factor family. Methylated by PrmC. Methylation increases the termination efficiency of RF1.

The protein localises to the cytoplasm. Peptide chain release factor 1 directs the termination of translation in response to the peptide chain termination codons UAG and UAA. This is Peptide chain release factor 1 from Leptospira interrogans serogroup Icterohaemorrhagiae serovar copenhageni (strain Fiocruz L1-130).